The chain runs to 1256 residues: Protein flightless-1 (1256 aa).

LRR repeat units lie at residues 4 to 28 (LPFV…MRQM), 29 to 51 (SRVQ…LGHL), 52 to 74 (QKLE…LTEL), 75 to 99 (SCLR…LFHL), 100 to 122 (EELT…LERA), 124 to 145 (NLIV…LFIH), 147 to 169 (TDLL…TRRL), 171 to 192 (NLKT…QLPS), 218 to 241 (LANL…VYNV), 243 to 264 (TLVR…VELW), 265 to 287 (QRLE…LCKL), 289 to 312 (KLRR…IGKL), 313 to 335 (GALE…LCRC), 336 to 358 (GALK…IHLL), and 360 to 381 (GLDQ…PSEA). Residues 405–476 (AAVPPSMPSS…ESLKPKRWDE (72 aa)) form a disordered region. A compositionally biased stretch (basic and acidic residues) spans 431-476 (PRSEGDQDAAKVLKGMKDVAKDKDNEAGAVPEDGKPESLKPKRWDE). Gelsolin-like repeat units follow at residues 512 to 589 (IEEV…EQFL), 633 to 703 (EPVA…AEFW), 749 to 822 (VELP…MQIF), and 1168 to 1242 (EKCA…SRRF).

The protein belongs to the villin/gelsolin family. In terms of tissue distribution, found in ovaries, larval fat bodies, brain and adult thorax.

In terms of biological role, may play a key role in embryonic cellularization by interacting with both the cytoskeleton and other cellular components. Alternatively, it may play a structural role in indirect flight muscle. Vital for embryonic development. The protein is Protein flightless-1 (fliI) of Drosophila melanogaster (Fruit fly).